We begin with the raw amino-acid sequence, 181 residues long: UPF0340 protein OB2986 (181 aa).

The protein belongs to the UPF0340 family.

In Oceanobacillus iheyensis (strain DSM 14371 / CIP 107618 / JCM 11309 / KCTC 3954 / HTE831), this protein is UPF0340 protein OB2986.